The sequence spans 494 residues: MGSTSSLYAAIDLGSNSFHMLVVREVAGSIQTLTRIKRKVRLAAGLNSENALSNEAMERGWQCLRLFAERLQDIPPSQIRVVATATLRLAVNAGDFIAKAQEILGCPVQVISGEEEARLIYQGVAHTTGGADQRLVVDIGGASTELVTGTGAQTTSLFSLSMGCVTWLERYFADRNLGQENFDAAEKAAREVLRPVADELRYHGWKVCVGASGTVQALQEIMMAQGMDERITLEKLQQLKQRAIHCGRLEELEIDGLTLERALVFPSGLAILIAIFTELNIQCMTLAGGALREGLVYGMLHLAVEQDIRSRTLRNIQRRFMIDIDQAQRVAKVAANFFDQVEKEWHLEAISRDLLISACQLHEIGLSVDFKQAPQHAAYLVRNLDLPGFTPAQKKLLATLLLNQTNPVDLSSLHQQNAVPPRVAEQLCRLLRLAIIFASRRRDDLVPEMTLQANHELLTLTLPQGWLTQHPLGKEIIAQESQWQSYVHWPLEVH.

It belongs to the GppA/Ppx family. GppA subfamily.

It carries out the reaction guanosine 3'-diphosphate 5'-triphosphate + H2O = guanosine 3',5'-bis(diphosphate) + phosphate + H(+). The protein operates within purine metabolism; ppGpp biosynthesis; ppGpp from GTP: step 2/2. Its function is as follows. Catalyzes the conversion of pppGpp to ppGpp. Guanosine pentaphosphate (pppGpp) is a cytoplasmic signaling molecule which together with ppGpp controls the 'stringent response', an adaptive process that allows bacteria to respond to amino acid starvation, resulting in the coordinated regulation of numerous cellular activities. In Escherichia coli O139:H28 (strain E24377A / ETEC), this protein is Guanosine-5'-triphosphate,3'-diphosphate pyrophosphatase.